Here is a 240-residue protein sequence, read N- to C-terminus: Phosducin-like protein 3 (240 aa).

The residue at position 1 (M1) is an N-acetylmethionine. One can recognise a Phosducin domain in the interval K27–G181. Phosphoserine occurs at positions 44, 65, 235, and 237. The thioredoxin fold stretch occupies residues F92 to D240.

It belongs to the phosducin family. Interacts (via thioredoxin fold region) with KDR/VEGFR2 (via juxtamembrane domain). Forms ternary complexes with the chaperonin CCT complex and actin substrate, leading to inhibition of actin folding. Interacts with XIAP (via BIR 3 and RING domain). Interacts with HSP90AA1 and HSP90AB1. In terms of processing, N-terminal methionine acetylation destabilizes the protein. In terms of tissue distribution, expressed in blood vessels (at protein level).

The protein resides in the cytoplasm. It is found in the perinuclear region. The protein localises to the endoplasmic reticulum. Acts as a chaperone for the angiogenic VEGF receptor KDR/VEGFR2, increasing its abundance by inhibiting its ubiquitination and degradation. Inhibits the folding activity of the chaperonin-containing T-complex (CCT) which leads to inhibition of cytoskeletal actin folding. Acts as a chaperone during heat shock alongside HSP90 and HSP40/70 chaperone complexes. Modulates the activation of caspases during apoptosis. This is Phosducin-like protein 3 (Pdcl3) from Mus musculus (Mouse).